A 193-amino-acid polypeptide reads, in one-letter code: Epididymal-specific lipocalin-12 (193 aa).

A signal peptide spans 1–19 (MGPWWALWLILTLPQILGG). An intrachain disulfide couples C88 to C193. Residues N143 and N172 are each glycosylated (N-linked (GlcNAc...) asparagine).

This sequence belongs to the calycin superfamily. Lipocalin family. In terms of assembly, monomer.

It localises to the secreted. In terms of biological role, binds all-trans retinoic acid and may act as a retinoid carrier protein within the epididymis. May play a role in male fertility. This chain is Epididymal-specific lipocalin-12 (Lcn12), found in Rattus norvegicus (Rat).